The sequence spans 308 residues: Ribosomal RNA small subunit methyltransferase H (308 aa).

Residues glycine 35–histidine 37, aspartate 55, phenylalanine 79, aspartate 100, and glutamine 107 each bind S-adenosyl-L-methionine.

Belongs to the methyltransferase superfamily. RsmH family.

The protein resides in the cytoplasm. The catalysed reaction is cytidine(1402) in 16S rRNA + S-adenosyl-L-methionine = N(4)-methylcytidine(1402) in 16S rRNA + S-adenosyl-L-homocysteine + H(+). Its function is as follows. Specifically methylates the N4 position of cytidine in position 1402 (C1402) of 16S rRNA. The polypeptide is Ribosomal RNA small subunit methyltransferase H (Dechloromonas aromatica (strain RCB)).